The chain runs to 481 residues: UDP-N-acetylmuramoyl-L-alanyl-D-glutamate--L-lysine ligase (481 aa).

Ser42 lines the UDP-N-acetyl-alpha-D-muramoyl-L-alanyl-D-glutamate pocket. 118–124 (GTKGKTT) provides a ligand contact to ATP. UDP-N-acetyl-alpha-D-muramoyl-L-alanyl-D-glutamate is bound by residues 160-161 (TT), Ser187, and Arg195. At Lys229 the chain carries N6-carboxylysine. Residues 404–407 (DDPN) carry the L-lysine recognition motif motif.

Belongs to the MurCDEF family. MurE subfamily. Post-translationally, carboxylation is probably crucial for Mg(2+) binding and, consequently, for the gamma-phosphate positioning of ATP.

The protein resides in the cytoplasm. It catalyses the reaction UDP-N-acetyl-alpha-D-muramoyl-L-alanyl-D-glutamate + L-lysine + ATP = UDP-N-acetyl-alpha-D-muramoyl-L-alanyl-gamma-D-glutamyl-L-lysine + ADP + phosphate + H(+). It functions in the pathway cell wall biogenesis; peptidoglycan biosynthesis. Its function is as follows. Catalyzes the addition of L-lysine to the nucleotide precursor UDP-N-acetylmuramoyl-L-alanyl-D-glutamate (UMAG) in the biosynthesis of bacterial cell-wall peptidoglycan. In Streptococcus sanguinis (strain SK36), this protein is UDP-N-acetylmuramoyl-L-alanyl-D-glutamate--L-lysine ligase.